Reading from the N-terminus, the 152-residue chain is MSDPIKVDVRQLPHAEGLPLPSYQSTQAAGLDLIAAIGEQAPLVLAAGRRAMVPTGLVIALPDGYEAQVRPRSGLAARHGVTVLNSPGTVDADYRGEINVLLVNLGSEAFTIRRGERIAQMIVAPVTRVELVRAAALPATPRGSGGFGSTGR.

Substrate is bound by residues 72-74 (RSG), asparagine 85, and 89-91 (TVD).

The protein belongs to the dUTPase family. It depends on Mg(2+) as a cofactor.

It carries out the reaction dUTP + H2O = dUMP + diphosphate + H(+). Its pathway is pyrimidine metabolism; dUMP biosynthesis; dUMP from dCTP (dUTP route): step 2/2. Its function is as follows. This enzyme is involved in nucleotide metabolism: it produces dUMP, the immediate precursor of thymidine nucleotides and it decreases the intracellular concentration of dUTP so that uracil cannot be incorporated into DNA. This chain is Deoxyuridine 5'-triphosphate nucleotidohydrolase, found in Nitrobacter winogradskyi (strain ATCC 25391 / DSM 10237 / CIP 104748 / NCIMB 11846 / Nb-255).